The primary structure comprises 242 residues: Glutamate transport ATP-binding protein GluA (242 aa).

The 235-residue stretch at 2 to 236 folds into the ABC transporter domain; the sequence is IKMTGVQKFF…PQTDRAKDFL (235 aa). 34-41 contacts ATP; the sequence is GPSGSGKS.

Belongs to the ABC transporter superfamily. The complex is composed of two ATP-binding proteins (GluA), two transmembrane proteins (GluC and GluD) and a solute-binding protein (GluB).

Its subcellular location is the cell membrane. It catalyses the reaction a polar amino acid(out) + ATP + H2O = a polar amino acid(in) + ADP + phosphate + H(+). The enzyme catalyses L-glutamate(out) + ATP + H2O = L-glutamate(in) + ADP + phosphate + H(+). Functionally, part of the ABC transporter complex GluABCD involved in glutamate uptake. Probably responsible for energy coupling to the transport system. The chain is Glutamate transport ATP-binding protein GluA from Corynebacterium efficiens (strain DSM 44549 / YS-314 / AJ 12310 / JCM 11189 / NBRC 100395).